Here is a 212-residue protein sequence, read N- to C-terminus: Peroxisomal membrane protein 4 (212 aa).

Transmembrane regions (helical) follow at residues Gly-97–Gly-117 and Leu-151–Phe-171. Asn-206 carries N-linked (GlcNAc...) asparagine glycosylation.

It belongs to the peroxisomal membrane protein PXMP2/4 family. Interacts with PEX19. Liver.

It localises to the peroxisome membrane. The protein is Peroxisomal membrane protein 4 (Pxmp4) of Rattus norvegicus (Rat).